Consider the following 67-residue polypeptide: UPF0337 protein Atu4724 (67 aa).

The protein belongs to the UPF0337 (CsbD) family.

This chain is UPF0337 protein Atu4724, found in Agrobacterium fabrum (strain C58 / ATCC 33970) (Agrobacterium tumefaciens (strain C58)).